The following is a 157-amino-acid chain: UPF0251 protein CLJ_B1488 (157 aa).

It belongs to the UPF0251 family.

The protein is UPF0251 protein CLJ_B1488 of Clostridium botulinum (strain 657 / Type Ba4).